Consider the following 578-residue polypeptide: Protein BONZAI 1 (578 aa).

The N-myristoyl glycine moiety is linked to residue Gly2. C2 domains are found at residues 26 to 163 (ALGA…TSTL) and 176 to 303 (QPHH…NFSL). Ca(2+)-binding residues include Asp63, Asp69, Asp122, and Asp124. The 220-residue stretch at 341 to 560 (NFMVAIDFTA…SVVQALLAEL (220 aa)) folds into the VWFA domain.

The protein belongs to the copine family. As to quaternary structure, interacts (via VWA domain) with BAP1 and BAP2. Interacts with HSP70-1 and HSP70-2. The cofactor is Ca(2+). In terms of processing, based on mass spectrometry analysis, the N-peptide must be modified and there might be additional modifications other than myristoylation. As to expression, expressed in roots and flowers and, at higher levels, in leaves and stems. Strongly expressed in growing tissues. Not detected in green siliques.

The protein localises to the cell membrane. Its function is as follows. Negative regulator of cell death and defense responses. Negative regulator of several R genes, including SNC1. May have effects in promoting growth and development. May function in membrane trafficking and in fusion of vesicles with plasma membrane at low temperature. Exhibits calcium-dependent phospholipid binding properties. In Arabidopsis thaliana (Mouse-ear cress), this protein is Protein BONZAI 1 (BON1).